Consider the following 345-residue polypeptide: tRNA pseudouridine synthase B (345 aa).

D39 functions as the Nucleophile in the catalytic mechanism.

It belongs to the pseudouridine synthase TruB family. Type 1 subfamily.

It carries out the reaction uridine(55) in tRNA = pseudouridine(55) in tRNA. In terms of biological role, responsible for synthesis of pseudouridine from uracil-55 in the psi GC loop of transfer RNAs. This is tRNA pseudouridine synthase B from Rickettsia africae (strain ESF-5).